A 481-amino-acid polypeptide reads, in one-letter code: UDP-N-acetylmuramate--L-alanine ligase (481 aa).

Residue 115 to 121 (GTHGKTT) participates in ATP binding.

The protein belongs to the MurCDEF family.

It is found in the cytoplasm. It carries out the reaction UDP-N-acetyl-alpha-D-muramate + L-alanine + ATP = UDP-N-acetyl-alpha-D-muramoyl-L-alanine + ADP + phosphate + H(+). The protein operates within cell wall biogenesis; peptidoglycan biosynthesis. Functionally, cell wall formation. This is UDP-N-acetylmuramate--L-alanine ligase from Rhodospirillum rubrum (strain ATCC 11170 / ATH 1.1.1 / DSM 467 / LMG 4362 / NCIMB 8255 / S1).